Here is a 341-residue protein sequence, read N- to C-terminus: Biotin synthase (341 aa).

Residues 40–267 (AEIQVSTLLS…RSMVRLSAGR (228 aa)) enclose the Radical SAM core domain. Positions 55, 59, and 62 each coordinate [4Fe-4S] cluster. Residues cysteine 99, cysteine 130, cysteine 190, and arginine 262 each coordinate [2Fe-2S] cluster.

The protein belongs to the radical SAM superfamily. Biotin synthase family. As to quaternary structure, homodimer. It depends on [4Fe-4S] cluster as a cofactor. [2Fe-2S] cluster is required as a cofactor.

The catalysed reaction is (4R,5S)-dethiobiotin + (sulfur carrier)-SH + 2 reduced [2Fe-2S]-[ferredoxin] + 2 S-adenosyl-L-methionine = (sulfur carrier)-H + biotin + 2 5'-deoxyadenosine + 2 L-methionine + 2 oxidized [2Fe-2S]-[ferredoxin]. It functions in the pathway cofactor biosynthesis; biotin biosynthesis; biotin from 7,8-diaminononanoate: step 2/2. Functionally, catalyzes the conversion of dethiobiotin (DTB) to biotin by the insertion of a sulfur atom into dethiobiotin via a radical-based mechanism. The chain is Biotin synthase from Xylella fastidiosa (strain M12).